The chain runs to 821 residues: MGQTNSRHSLIETDEPTTSSRVSMLVDRVKLLWKRYTTPLSTEDGSREAHFAVPSENYADTPSRNTPNSSNGFPSETLVTSSAHCSTQPHKDEAYSHHGYSSTMALDDSSLAQTYHEYEEGTSGNSPLRRAIGSYDFLHPRPSGNSSRLDRNSSRPFTSSFHSAPFLSSYGSSNDPSQERVNEYSLPSNSNSTYTTPLQSINNEHPLPTVLENNALLNNSGNSPSLINHLRQYLNQDFSRLHQSPSPIPNSNDNDSQTRRSSWSSIASAFNDFPEEFPNASNPEAHSNFTPLNGNDESTVNMLSRLLSAAAIETVASIMNSEARNMDSQNMANGEPSRFRSVDGSFEQFLTDLRSGNLTNVLQNSSQNGNDQISSDPESNSSDLQYLRMFRFPSFHQSHNQPASNNEASDTNGPALVPVLIVCMRSISETSEDHAPTMTQENQSLHNESRENISINDITERMAQSTEFSTDLPPTFERSNSTFSHPEPTRSDFSQAFTPVSDFPANLFPGSRNLFPTSNSGNQSTSSFSRYNQPTVSVDLRNSSILRRAQEPVNGSTGENHIGDDYISSLLDSSNSNSQRPFSTVPSESNVFSRNASGNFSMSQTHQPTTDNTSSFSTQPGRLSTGLHHFPSDRDLLSNQTRRSSLARSYRFEEQLSVDDNTSDFSTLASNGAADMVTQTHSEGTFSNSTHGDWLIYVFGGLFPEHHPVLSTVSLFSDNPMYEDLLALTTYLGPAKKPVASHEDVKRSGGLFAYFDDASLSSADSCLICLETYTNGDICRKLQACKHFFHQACIDQWLTTGNNSCPLCRAHGVTTQAEEEN.

Disordered stretches follow at residues 1-20 (MGQTNSRHSLIETDEPTTSS), 55-96 (SENY…EAYS), 134-205 (SYDF…NNEH), 240-263 (RLHQSPSPIPNSNDNDSQTRRSSW), 274-293 (PEEFPNASNPEAHSNFTPLN), 360-381 (NVLQNSSQNGNDQISSDPESNS), 430-450 (TSEDHAPTMTQENQSLHNESR), 467-497 (EFSTDLPPTFERSNSTFSHPEPTRSDFSQAF), 512-535 (RNLFPTSNSGNQSTSSFSRYNQPT), and 549-641 (AQEP…SNQT). Composition is skewed to polar residues over residues 58–88 (YADTPSRNTPNSSNGFPSETLVTSSAHCSTQ) and 185–203 (SLPSNSNSTYTTPLQSINN). Over residues 279–293 (NASNPEAHSNFTPLN) the composition is skewed to polar residues. Over residues 437-450 (TMTQENQSLHNESR) the composition is skewed to polar residues. Composition is skewed to low complexity over residues 517-529 (TSNSGNQSTSSFS) and 568-578 (SSLLDSSNSNS). Residues 579-622 (QRPFSTVPSESNVFSRNASGNFSMSQTHQPTTDNTSSFSTQPGR) show a composition bias toward polar residues. An RING-type; atypical zinc finger spans residues 766–809 (CLICLETYTNGDICRKLQACKHFFHQACIDQWLTTGNNSCPLCR).

This is an uncharacterized protein from Schizosaccharomyces pombe (strain 972 / ATCC 24843) (Fission yeast).